A 66-amino-acid polypeptide reads, in one-letter code: Large ribosomal subunit protein bL35 (66 aa).

Residues 1-26 (MPKMKTHRGAAKRFKKTGTGKLKRGH) show a composition bias toward basic residues. Positions 1–48 (MPKMKTHRGAAKRFKKTGTGKLKRGHAYTSHLFANKTQKQKRKLRKAT) are disordered.

This sequence belongs to the bacterial ribosomal protein bL35 family.

The protein is Large ribosomal subunit protein bL35 of Geobacillus sp. (strain WCH70).